Consider the following 343-residue polypeptide: Phosphate acyltransferase (343 aa).

The protein belongs to the PlsX family. Homodimer. Probably interacts with PlsY.

The protein resides in the cytoplasm. It catalyses the reaction a fatty acyl-[ACP] + phosphate = an acyl phosphate + holo-[ACP]. The protein operates within lipid metabolism; phospholipid metabolism. Functionally, catalyzes the reversible formation of acyl-phosphate (acyl-PO(4)) from acyl-[acyl-carrier-protein] (acyl-ACP). This enzyme utilizes acyl-ACP as fatty acyl donor, but not acyl-CoA. In Neorickettsia sennetsu (strain ATCC VR-367 / Miyayama) (Ehrlichia sennetsu), this protein is Phosphate acyltransferase.